We begin with the raw amino-acid sequence, 586 residues long: Arginine--tRNA ligase (586 aa).

A 'HIGH' region motif is present at residues alanine 131–histidine 141.

Belongs to the class-I aminoacyl-tRNA synthetase family. In terms of assembly, monomer.

Its subcellular location is the cytoplasm. It catalyses the reaction tRNA(Arg) + L-arginine + ATP = L-arginyl-tRNA(Arg) + AMP + diphosphate. This chain is Arginine--tRNA ligase, found in Xanthobacter autotrophicus (strain ATCC BAA-1158 / Py2).